Reading from the N-terminus, the 131-residue chain is Small ribosomal subunit protein uS8 (131 aa).

It belongs to the universal ribosomal protein uS8 family. Part of the 30S ribosomal subunit. Contacts proteins S5 and S12.

One of the primary rRNA binding proteins, it binds directly to 16S rRNA central domain where it helps coordinate assembly of the platform of the 30S subunit. This chain is Small ribosomal subunit protein uS8, found in Dictyoglomus thermophilum (strain ATCC 35947 / DSM 3960 / H-6-12).